The chain runs to 1242 residues: Insulin receptor substrate 1 (1242 aa).

Ser3 is subject to Phosphoserine. The segment at Ser3–Ser137 is mediates interaction with PHIP. Positions Asp12 to Asn115 constitute a PH domain. Ser99 is subject to Phosphoserine; by CK2. The IRS-type PTB domain maps to Phe160–Phe264. The tract at residues Asp262–Glu430 is disordered. The span at Lys269–Ser281 shows a compositional bias: low complexity. Phosphoserine; by RPS6KB1 is present on residues Ser270 and Ser307. Position 312 is a phosphoserine; by IKKB, MAPK8 and RPS6KB1 (Ser312). Phosphoserine is present on residues Ser315, Ser323, Ser330, Ser345, and Ser348. Residues Thr354–Ala363 are compositionally biased toward basic residues. Composition is skewed to low complexity over residues Ser383–Ser404 and Ser412–Gly424. A Phosphoserine modification is found at Ser419. Phosphothreonine is present on residues Thr446 and Thr453. Tyr465 is modified (phosphotyrosine; by INSR). A YXXM motif 1 motif is present at residues Tyr465 to Met468. Ser527 bears the Phosphoserine; by RPS6KB1 mark. Positions Tyr551–Met554 match the YXXM motif 2 motif. Basic and acidic residues predominate over residues Leu592–Asp610. The interval Leu592–Ser616 is disordered. At Tyr612 the chain carries Phosphotyrosine; by INSR. Residues Tyr612 to Met615 carry the YXXM motif 3 motif. Ser616 and Ser629 each carry phosphoserine. Tyr632 is subject to Phosphotyrosine; by INSR. The YXXM motif 4 signature appears at Tyr632–Met635. Ser636 is subject to Phosphoserine; by RPS6KB1. Tyr662 carries the post-translational modification Phosphotyrosine. The short motif at Tyr662–Met665 is the YXXM motif 5 element. A disordered region spans residues Ser668 to Thr693. A YXXM motif 6 motif is present at residues Tyr732–Met735. Disordered regions lie at residues Phe771–Glu900 and Ser918–Gly937. A compositionally biased stretch (basic and acidic residues) spans Arg776–Arg785. Position 794 is a phosphoserine; by AMPK and SIK2 (Ser794). Over residues Ala801–Ser815 the composition is skewed to low complexity. At Ser892 the chain carries Phosphoserine. Residue Tyr896 is modified to Phosphotyrosine; by INSR. The GRB2-binding stretch occupies residues Tyr896–Asn898. Polar residues predominate over residues Ser918–Gln928. Residues Tyr941 and Tyr989 each carry the phosphotyrosine; by INSR modification. 3 short sequence motifs (YXXM motif) span residues Tyr941–Met944, Tyr989–Met992, and Tyr1012–Met1015. Positions Ser1057–Phe1146 are disordered. Polar residues predominate over residues Thr1073 to Ala1085. Ser1100 is subject to Phosphoserine. Phosphoserine; by RPS6KB1 and PKC/PRKCQ is present on Ser1101. Positions Glu1102 to Gly1114 are enriched in polar residues. The residue at position 1179 (Tyr1179) is a Phosphotyrosine; by INSR. Residues Lys1186 and Lys1189 each participate in a glycyl lysine isopeptide (Lys-Gly) (interchain with G-Cter in ubiquitin) cross-link. Positions Gln1190–Gln1242 are disordered. The span at Glu1198 to Gln1209 shows a compositional bias: pro residues. Residues Pro1210 to Arg1220 are compositionally biased toward low complexity. Position 1229 is a phosphotyrosine; by INSR (Tyr1229).

As to quaternary structure, interacts with UBTF and PIK3CA. Interacts (via phosphorylated YXXM motifs) with PIK3R1. Interacts with ROCK1 and FER. Interacts (via PH domain) with PHIP. Interacts with GRB2. Interacts with SOCS7. Interacts (via IRS-type PTB domain) with IGF1R and INSR (via the tyrosine-phosphorylated NPXY motif). Interacts with ALK. Interacts with EIF2AK2/PKR. Interacts with GKAP1. Interacts with DGKZ in the absence of insulin; insulin stimulation decreases this interaction. Found in a ternary complex with DGKZ and PIP5K1A in the absence of insulin stimulation. Interacts with SQSTM1; the interaction is disrupted by the presence of tensin TNS2. Interacts with NCK1 (via SH2 domain). Interacts with NCK2 (via SH3 domain). Interacts with SH2B1; this interaction enhances leptin-induced activation of the PI3-kinase pathway. Interacts with DVL2; this interaction promotes the Wnt/beta-catenin signaling pathway. In terms of processing, serine phosphorylation of IRS1 is a mechanism for insulin resistance. Ser-307, Ser-312, Ser-315, and Ser-323 phosphorylations inhibit insulin action through disruption of IRS1 interaction with the insulin receptor INSR. Phosphorylation of Tyr-896 is required for GRB2-binding. Phosphorylated by ALK. Phosphorylated at Ser-270, Ser-307, Ser-636 and Ser-1101 by RPS6KB1; phosphorylation induces accelerated degradation of IRS1. Phosphorylated on tyrosine residues in response to insulin. In skeletal muscles, dephosphorylated on Tyr-612 by TNS2 under anabolic conditions; dephosphorylation results in the proteasomal degradation of IRS1. Ubiquitinated by the Cul7-RING(FBXW8) complex in a mTOR-dependent manner, leading to its degradation: the Cul7-RING(FBXW8) complex recognizes and binds IRS1 previously phosphorylated by S6 kinase (RPS6KB1 or RPS6KB2). Ubiquitinated by TRAF4 through 'Lys-29' linkage; this ubiquitination regulates the interaction of IRS1 with IGFR and IRS1 tyrosine phosphorylation upon IGF1 stimulation. Post-translationally, S-nitrosylation at by BLVRB inhibits its activity.

The protein resides in the cytoplasm. The protein localises to the nucleus. Its function is as follows. Signaling adapter protein that participates in the signal transduction from two prominent receptor tyrosine kinases, insulin receptor/INSR and insulin-like growth factor I receptor/IGF1R. Plays therefore an important role in development, growth, glucose homeostasis as well as lipid metabolism. Upon phosphorylation by the insulin receptor, functions as a signaling scaffold that propagates insulin action through binding to SH2 domain-containing proteins including the p85 regulatory subunit of PI3K, NCK1, NCK2, GRB2 or SHP2. Recruitment of GRB2 leads to the activation of the guanine nucleotide exchange factor SOS1 which in turn triggers the Ras/Raf/MEK/MAPK signaling cascade. Activation of the PI3K/AKT pathway is responsible for most of insulin metabolic effects in the cell, and the Ras/Raf/MEK/MAPK is involved in the regulation of gene expression and in cooperation with the PI3K pathway regulates cell growth and differentiation. Acts a positive regulator of the Wnt/beta-catenin signaling pathway through suppression of DVL2 autophagy-mediated degradation leading to cell proliferation. This is Insulin receptor substrate 1 (IRS1) from Homo sapiens (Human).